We begin with the raw amino-acid sequence, 370 residues long: Phospho-2-dehydro-3-deoxyheptonate aldolase, tyrosine-inhibited (370 aa).

The residue at position 2 (serine 2) is an N-acetylserine.

Belongs to the class-I DAHP synthase family.

The catalysed reaction is D-erythrose 4-phosphate + phosphoenolpyruvate + H2O = 7-phospho-2-dehydro-3-deoxy-D-arabino-heptonate + phosphate. It participates in metabolic intermediate biosynthesis; chorismate biosynthesis; chorismate from D-erythrose 4-phosphate and phosphoenolpyruvate: step 1/7. Its activity is regulated as follows. Inhibited by tyrosine. Its function is as follows. Stereospecific condensation of phosphoenolpyruvate (PEP) and D-erythrose-4-phosphate (E4P) giving rise to 3-deoxy-D-arabino-heptulosonate-7-phosphate (DAHP). The protein is Phospho-2-dehydro-3-deoxyheptonate aldolase, tyrosine-inhibited (ARO4) of Saccharomyces cerevisiae (strain ATCC 204508 / S288c) (Baker's yeast).